Consider the following 305-residue polypeptide: MTNKQRLVHLFIEYLQIEKNYSALTISGYTEAIEEFVRFMNVQGIDGFEEVSYQDTRIYLTEAYEKGLTRRTISKKVSALRSFYKFLLREQLVKENPFLLVSLPKQDKRIPSFLYEEELKELFTVSDVSTPLGQRNQAILELLYATGMRVSELCSLKESDLDLSMDTVLVHGKGSKQRYVPFGSYAHEALITYLEDGRLKLKAKGKDRADAYVFLNQRGAPLTDRGVRFILTELMKKASGTLHIHPHMLRHTFATHLLNEGADLRSVQELLGHSNLSSTQVYTHVSKDSLRKTYMSHHPRAFKRS.

The region spanning 2 to 88 (TNKQRLVHLF…ALRSFYKFLL (87 aa)) is the Core-binding (CB) domain. The Tyr recombinase domain occupies 109-295 (RIPSFLYEEE…SKDSLRKTYM (187 aa)). Active-site residues include R149, K173, H247, R250, and H273. Catalysis depends on Y282, which acts as the O-(3'-phospho-DNA)-tyrosine intermediate.

Belongs to the 'phage' integrase family. XerC subfamily. In terms of assembly, forms a cyclic heterotetrameric complex composed of two molecules of XerC and two molecules of XerD.

It is found in the cytoplasm. Site-specific tyrosine recombinase, which acts by catalyzing the cutting and rejoining of the recombining DNA molecules. The XerC-XerD complex is essential to convert dimers of the bacterial chromosome into monomers to permit their segregation at cell division. It also contributes to the segregational stability of plasmids. In Bacillus pumilus (strain SAFR-032), this protein is Tyrosine recombinase XerC.